The sequence spans 202 residues: Ribonuclease HII (202 aa).

The RNase H type-2 domain occupies 12-201; the sequence is LLIAGVDEAG…VRQLKLFIPE (190 aa). Residues Asp-18, Glu-19, and Asp-110 each coordinate a divalent metal cation.

The protein belongs to the RNase HII family. The cofactor is Mn(2+). Requires Mg(2+) as cofactor.

The protein resides in the cytoplasm. It carries out the reaction Endonucleolytic cleavage to 5'-phosphomonoester.. Endonuclease that specifically degrades the RNA of RNA-DNA hybrids. This is Ribonuclease HII from Coxiella burnetii (strain CbuK_Q154) (Coxiella burnetii (strain Q154)).